A 584-amino-acid polypeptide reads, in one-letter code: Levansucrase (584 aa).

The first 30 residues, 1 to 30, serve as a signal peptide directing secretion; it reads MAHVRRKVATLNMALAGSLLMVLGAQSALA. Gln-31 carries the post-translational modification Pyrrolidone carboxylic acid. Sucrose is bound by residues Trp-134, Asp-135, Ser-225, Arg-308, and Asp-309. Residue Asp-135 is the Nucleophile of the active site. Cys-339 and Cys-395 are oxidised to a cystine. The Proton donor/acceptor role is filled by Glu-401.

It belongs to the glycosyl hydrolase 68 family. Monomer. Post-translationally, the N-terminus is blocked. The N-terminal Gln is cyclized to a pyroglutamic acid.

The protein resides in the secreted. The catalysed reaction is [6)-beta-D-fructofuranosyl-(2-&gt;](n) alpha-D-glucopyranoside + sucrose = [6)-beta-D-fructofuranosyl-(2-&gt;](n+1) alpha-D-glucopyranoside + D-glucose. Strongly inhibited by Hg(2+) and slightly activated by Co(2+). Not inhibited by the metal ion chelator EDTA, suggesting that this enzyme does not need a metal cofactor. Functionally, catalyzes the synthesis of levan, a fructose polymer, by transferring the fructosyl moiety from sucrose to a growing acceptor molecule. Also displays sucrose hydrolase activity. In vitro, catalyzes transfructosylation from sucrose to a variety of acceptors including water (sucrose hydrolysis), glucose (exchange reaction), fructan (polymerase reaction) and sucrose (oligofructoside synthesis). Levansucrase of G.diazotrophicus SRT4, unlike the enzyme of B.subtilis, causes accumulation of large quantities of tri- and tetrasaccharides but small quantities of high-molecular-mass levan. It may act more as a sucrose hydrolase than as a fructan polymerase, and may be the key enzyme in the sucrose metabolism of G.diazotrophicus SRT4. The protein is Levansucrase of Gluconacetobacter diazotrophicus (Acetobacter diazotrophicus).